The chain runs to 97 residues: Putative membrane protein insertion efficiency factor (97 aa).

Belongs to the UPF0161 family.

Its subcellular location is the cell inner membrane. Its function is as follows. Could be involved in insertion of integral membrane proteins into the membrane. The polypeptide is Putative membrane protein insertion efficiency factor (Chlamydia muridarum (strain MoPn / Nigg)).